Here is a 517-residue protein sequence, read N- to C-terminus: MAKAATPKTTAAAEAKPAAAKAPAKKAPAKTAAAKSDAAPKAAKTGAVGKITQVIGAVVDVQFEDGQLPLILNALETDNLGSRLVLEVAQHLGENTVRTIAMDSTEGLVRGHEVRDTGNPIMVPVGEETLGRIMNVIGEPVDEAGPIKTTARRAIHQEAPEYIEQSTEAEILVTGIKVVDLLAPYAKGGKIGLFGGAGVGKTVLIMELINNVAKAHGGYSVFAGVGERTREGNDLYHEMIESGVNKLGGGEGSKAALVYGQMNEPPGARARVALSGLTVAENFRDKGQDVLFFVDNIFRFTQAGSELSALLGRIPSAVGYQPTLATDMGAMQERITTTTKGSITSVQAIYVPADDLTDPAPATSFAHLDATTTLNRSIAEKGIYPAVDPLESTSRMLDPMIVGEEHYAVARQVQSILQRYKSLQDIIAILGMDELSEDDKLTVARARKIERFLSQPFFVAEVFTGSPGKLVDLADTIKGFKGLCAGEYDHLPEPAFYMVGSIEEAIEKAKKLAAEAA.

Composition is skewed to low complexity over residues 1–22 (MAKA…AAKA) and 29–42 (AKTA…APKA). A disordered region spans residues 1–42 (MAKAATPKTTAAAEAKPAAAKAPAKKAPAKTAAAKSDAAPKA). 195–202 (GGAGVGKT) provides a ligand contact to ATP.

The protein belongs to the ATPase alpha/beta chains family. F-type ATPases have 2 components, CF(1) - the catalytic core - and CF(0) - the membrane proton channel. CF(1) has five subunits: alpha(3), beta(3), gamma(1), delta(1), epsilon(1). CF(0) has three main subunits: a(1), b(2) and c(9-12). The alpha and beta chains form an alternating ring which encloses part of the gamma chain. CF(1) is attached to CF(0) by a central stalk formed by the gamma and epsilon chains, while a peripheral stalk is formed by the delta and b chains.

The protein resides in the cell inner membrane. The enzyme catalyses ATP + H2O + 4 H(+)(in) = ADP + phosphate + 5 H(+)(out). Functionally, produces ATP from ADP in the presence of a proton gradient across the membrane. The catalytic sites are hosted primarily by the beta subunits. In Brucella anthropi (strain ATCC 49188 / DSM 6882 / CCUG 24695 / JCM 21032 / LMG 3331 / NBRC 15819 / NCTC 12168 / Alc 37) (Ochrobactrum anthropi), this protein is ATP synthase subunit beta.